A 506-amino-acid polypeptide reads, in one-letter code: Bifunctional purine biosynthesis protein PurH (506 aa).

One can recognise an MGS-like domain in the interval 1 to 146 (MARLALLSVS…KNFAHLTVLC (146 aa)).

The protein belongs to the PurH family.

It catalyses the reaction (6R)-10-formyltetrahydrofolate + 5-amino-1-(5-phospho-beta-D-ribosyl)imidazole-4-carboxamide = 5-formamido-1-(5-phospho-D-ribosyl)imidazole-4-carboxamide + (6S)-5,6,7,8-tetrahydrofolate. The enzyme catalyses IMP + H2O = 5-formamido-1-(5-phospho-D-ribosyl)imidazole-4-carboxamide. The protein operates within purine metabolism; IMP biosynthesis via de novo pathway; 5-formamido-1-(5-phospho-D-ribosyl)imidazole-4-carboxamide from 5-amino-1-(5-phospho-D-ribosyl)imidazole-4-carboxamide (10-formyl THF route): step 1/1. It participates in purine metabolism; IMP biosynthesis via de novo pathway; IMP from 5-formamido-1-(5-phospho-D-ribosyl)imidazole-4-carboxamide: step 1/1. This Nostoc sp. (strain PCC 7120 / SAG 25.82 / UTEX 2576) protein is Bifunctional purine biosynthesis protein PurH.